The following is a 1401-amino-acid chain: DNA-directed RNA polymerase subunit beta'' (1401 aa).

Residues Cys224, Cys295, Cys302, and Cys305 each contribute to the Zn(2+) site.

The protein belongs to the RNA polymerase beta' chain family. RpoC2 subfamily. In plastids the minimal PEP RNA polymerase catalytic core is composed of four subunits: alpha, beta, beta', and beta''. When a (nuclear-encoded) sigma factor is associated with the core the holoenzyme is formed, which can initiate transcription. Zn(2+) serves as cofactor.

The protein resides in the plastid. It localises to the chloroplast. It catalyses the reaction RNA(n) + a ribonucleoside 5'-triphosphate = RNA(n+1) + diphosphate. In terms of biological role, DNA-dependent RNA polymerase catalyzes the transcription of DNA into RNA using the four ribonucleoside triphosphates as substrates. In Ipomoea purpurea (Common morning glory), this protein is DNA-directed RNA polymerase subunit beta''.